Consider the following 139-residue polypeptide: MIKGINHITYSVSNIAKSIEFYRDILGADILVESETSAYFNLGGIWLALNEEKNIPRSEIKYSYTHIAFTISDNDFEDWYNWLKENEVNILEGRDRDIRDKKSIYFTDLDGHKLELHTGSLEDRLSYYKEAKPHMNFYI.

The VOC domain maps to 4 to 119 (GINHITYSVS…DGHKLELHTG (116 aa)). 3 residues coordinate Mg(2+): H7, H66, and E115. E115 functions as the Proton donor/acceptor in the catalytic mechanism.

It belongs to the fosfomycin resistance protein family. FosB subfamily. In terms of assembly, homodimer. It depends on Mg(2+) as a cofactor.

The protein localises to the cytoplasm. Metallothiol transferase which confers resistance to fosfomycin by catalyzing the addition of a thiol cofactor to fosfomycin. L-cysteine is probably the physiological thiol donor. This chain is Metallothiol transferase FosB, found in Staphylococcus haemolyticus.